The primary structure comprises 417 residues: MGEDAAQAEKFQHPNTDMLQEKPSNPSPMPSSTPSPSLNLGSTEEAIRDNSQVNAVTVHTLLDKLVNMLDAVRENQHNMEQRQINLEGSVKGIQNDLTKLSKYQASTSNTVSKLLEKSRKVSAHTRAVRERLEKQCVQVKRLENNHAQLLRRNHFKVLIFQEESEIPASVFVKEPVPSTAEGKELADENKSLEETLHNVDLSSDDELPGDEEALEDSAEEKMEESRAEKIKRSSLKKVDSLKKAFSRQNIEKKMNKLGTKIVSVERREKIKKSLTPNHQKASSGKSSPFKVSPLSFGRKKIREGESSAENETKLEEQVQDDHEEGSFTEGLSEASLPSGLLEGSAEDAEKSALRGNNSGVGSNADLTIEEDEEEESVALQQAQQVRYESGYMLNSKEMEESSEKHVQAAVLHVDQTA.

The interval 1–42 (MGEDAAQAEKFQHPNTDMLQEKPSNPSPMPSSTPSPSLNLGS) is disordered. At glycine 2 the chain carries N-acetylglycine. An interaction with CAVIN1 region spans residues 2 to 168 (GEDAAQAEKF…IFQEESEIPA (167 aa)). Serine 27, serine 35, serine 37, and serine 51 each carry phosphoserine. 2 coiled-coil regions span residues 61–87 (LLDK…INLE) and 126–267 (RAVR…VERR). A leucine-zipper region spans residues 62–100 (LDKLVNMLDAVRENQHNMEQRQINLEGSVKGIQNDLTKL). Position 195 is a phosphothreonine (threonine 195). 2 disordered regions span residues 198 to 242 (NVDL…DSLK) and 256 to 381 (KLGT…ALQQ). Residues serine 202, serine 203, and serine 217 each carry the phosphoserine modification. Over residues 202 to 218 (SSDDELPGDEEALEDSA) the composition is skewed to acidic residues. The segment covering 219-242 (EEKMEESRAEKIKRSSLKKVDSLK) has biased composition (basic and acidic residues). The segment covering 274 to 286 (LTPNHQKASSGKS) has biased composition (polar residues). Residues serine 282, serine 283, serine 286, serine 287, serine 292, and serine 295 each carry the phosphoserine modification. Over residues 302 to 320 (REGESSAENETKLEEQVQD) the composition is skewed to basic and acidic residues. Phosphoserine occurs at positions 326, 335, 358, and 362. Over residues 354 to 365 (RGNNSGVGSNAD) the composition is skewed to polar residues. Threonine 367 carries the post-translational modification Phosphothreonine. The segment covering 367–376 (TIEEDEEEES) has biased composition (acidic residues). Phosphotyrosine is present on tyrosine 387. Residues serine 389 and serine 395 each carry the phosphoserine modification.

Belongs to the CAVIN family. Component of the CAVIN complex composed of CAVIN1, CAVIN2, CAVIN3 and CAVIN. Interacts with CAVIN4; this augments the transactivation of NPPA by CAVIN4. Binds to PRKCA in the presence of phosphatidylserine. Interacts with CAVIN1 and CAV3. The N-terminus is blocked. Post-translationally, phosphorylated on Ser residues.

Its subcellular location is the cytoplasm. The protein localises to the cytosol. It localises to the membrane. It is found in the caveola. Functionally, plays an important role in caveolar biogenesis and morphology. Regulates caveolae morphology by inducing membrane curvature within caveolae. Plays a role in caveola formation in a tissue-specific manner. Required for the formation of caveolae in the lung and fat endothelia but not in the heart endothelia. Negatively regulates the size or stability of CAVIN complexes in the lung endothelial cells. May play a role in targeting PRKCA to caveolae. The sequence is that of Caveolae-associated protein 2 from Rattus norvegicus (Rat).